The sequence spans 96 residues: Large ribosomal subunit protein bL25 (96 aa).

The protein belongs to the bacterial ribosomal protein bL25 family. As to quaternary structure, part of the 50S ribosomal subunit; part of the 5S rRNA/L5/L18/L25 subcomplex. Contacts the 5S rRNA. Binds to the 5S rRNA independently of L5 and L18.

Functionally, this is one of the proteins that binds to the 5S RNA in the ribosome where it forms part of the central protuberance. This Francisella philomiragia subsp. philomiragia (strain ATCC 25017 / CCUG 19701 / FSC 153 / O#319-036) protein is Large ribosomal subunit protein bL25.